The primary structure comprises 648 residues: RAF proto-oncogene serine/threonine-protein kinase (648 aa).

Ser-29 carries the post-translational modification Phosphoserine; by MAPK1. Ser-43 carries the phosphoserine; by PKA and MAPK1 modification. Residues 56–131 form the RBD domain; the sequence is NTIRVFLPNK…IGEELQVDFL (76 aa). The Phorbol-ester/DAG-type zinc finger occupies 138 to 184; it reads THNFARKTFLKLAFCDICQKFLLNGFRCQTCGYKFHEHCSTKVPTMC. Zn(2+) contacts are provided by His-139, Cys-152, Cys-155, Cys-165, Cys-168, His-173, Cys-176, and Cys-184. A disordered region spans residues 220-334; that stretch reads SVSRMPVSSQ…QEKNKIRPRG (115 aa). A compositionally biased stretch (polar residues) spans 239 to 271; sequence TFNTSSPSSEGSLSQRQRSTSTPNVHMVSTTLP. Ser-252 carries the phosphoserine modification. Ser-259 carries the phosphoserine; by PKA, PKC and PKB/AKT1 modification. Position 268 is a phosphothreonine; by autocatalysis (Thr-268). Position 269 is a phosphothreonine; by PKA (Thr-269). Positions 275 to 285 are enriched in basic and acidic residues; sequence RMIEDAIRSHS. Residues 286 to 301 are compositionally biased toward low complexity; that stretch reads ESASPSALSSSPNNLS. At Ser-289 the chain carries Phosphoserine; by MAPK1. Residue Ser-296 is modified to Phosphoserine. Ser-301 is modified (phosphoserine; by MAPK1). Residues 331 to 349 are interaction with PEBP1/RKIP; sequence RPRGQRDSSYYWEIEASEV. Ser-338 is subject to Phosphoserine; by PAK1, PAK2, PAK3 and PAK5. Ser-339 bears the Phosphoserine; by PAK1, PAK2 and PAK3 mark. Tyr-340 and Tyr-341 each carry phosphotyrosine; by SRC. Residues 349–609 form the Protein kinase domain; that stretch reads VMLSTRIGSG…PQILSSIELL (261 aa). Residues 355-363 and Lys-375 contribute to the ATP site; that span reads IGSGSFGTV. Catalysis depends on Asp-468, which acts as the Proton acceptor. Position 471 is a phosphoserine (Ser-471). Thr-491 bears the Phosphothreonine mark. Ser-494 bears the Phosphoserine mark. Ser-499 is modified (phosphoserine; by PKC). Position 563 is a symmetric dimethylarginine; by PRMT5 (Arg-563). Ser-621 bears the Phosphoserine mark. Ser-642 is modified (phosphoserine; by MAPK1).

It belongs to the protein kinase superfamily. TKL Ser/Thr protein kinase family. RAF subfamily. Monomer. Homodimer. Heterodimerizes with BRAF and this heterodimer possesses a highly increased kinase activity compared to the respective homodimers or monomers. Heterodimerization is mitogen-regulated and enhanced by 14-3-3 proteins. MAPK1/ERK2 activation can induce a negative feedback that promotes the dissociation of the heterodimer. Forms a multiprotein complex with Ras (M-Ras/MRAS), SHOC2 and protein phosphatase 1 (PPP1CA, PPP1CB and PPP1CC). Interacts with LZTR1. Interacts with Ras proteins; the interaction is antagonized by RIN1. Weakly interacts with RIT1. Interacts (via N-terminus) with RGS14 (via RBD domains); the interaction mediates the formation of a ternary complex with BRAF, a ternary complex inhibited by GNAI1. Probably forms a complex composed of chaperones HSP90 and HSP70, co-chaperones CDC37, PPP5C, TSC1 and client protein TSC2, CDK4, AKT, RAF1 and NR3C1; this complex does not contain co-chaperones STIP1/HOP and PTGES3/p23. Interacts with STK3/MST2; the interaction inhibits its pro-apoptotic activity. Interacts (when phosphorylated at Ser-259) with YWHAZ (unphosphorylated at 'Thr-232'). Interacts with MAP2K1/MEK1 and MAP2K2/MEK2. Interacts with MAP3K5/ASF1 (via N-terminus) and this interaction inhibits the proapoptotic function of MAP3K5/ASK1. Interacts with PAK1 (via kinase domain). The phosphorylated form interacts with PIN1. The Ser-338 and Ser-339 phosphorylated form (by PAK1) interacts with BCL2. Interacts with PEBP1/RKIP and this interaction is enhanced if RAF1 is phosphorylated on residues Ser-338, Ser-339, Tyr-340 and Tyr-341. Interacts with ADCY2, ADCY5, ADCY6, DGKH, RCAN1/DSCR1, PPP1R12A, PKB/AKT1, PPP2CA, PPP2R1B, SPRY2, SPRY4, CNKSR1/CNK1, KSR2 and PHB/prohibitin. Interacts with ROCK2. In its active form, interacts with PRMT5. Interacts with FAM83B; displaces 14-3-3 proteins from RAF1 and activates RAF1. Interacts with PDE8A; the interaction promotes RAF1 activity. Interacts with MFHAS1. Interacts with GLS. Interacts with NEK10 and MAP2K1; the interaction is direct with NEK10 and required for ERK1/2-signaling pathway activation in response to UV irradiation. Zn(2+) is required as a cofactor. Phosphorylation at Thr-269, Ser-338, Tyr-341, Thr-491 and Ser-494 results in its activation. Phosphorylation at Ser-29, Ser-43, Ser-289, Ser-296, Ser-301 and Ser-642 by MAPK1/ERK2 results in its inactivation. Phosphorylation at Ser-259 induces the interaction with YWHAZ and inactivates kinase activity. Dephosphorylation of Ser-259 by the SHOC2-MRAS-PP1c (SMP) complex consisting of SHOC2, GTP-bound M-Ras/MRAS and the catalytic subunit of protein phosphatase 1 (PPP1CA, PPP1CB or PPP1CC); this relieves inactivation and stimulates kinase activity. Phosphorylation at Ser-338 by PAK1 and PAK5 and Ser-339 by PAK1 is required for its mitochondrial localization. Phosphorylation at Ser-621 in response to growth factor treatment stabilizes the protein, possibly by preventing proteasomal degradation. Phosphorylation at Ser-289, Ser-296, Ser-301, Ser-338 and Ser-621 are somehow linked to the methylation potential of cells. Treatment of cells with HGF in the presence of the methylation inhibitor 5'-methylthioadenosine (MTA) results in increased phosphorylation at Ser-338 and Ser-621 and decreased phosphorylation at Ser-296, Ser-301 and Ser-338. Dephosphorylation at Ser-338 by PPP5C results in an activity decrease. In terms of processing, methylated at Arg-563 in response to EGF treatment. This modification leads to destabilization of the protein, possibly through proteasomal degradation. In terms of tissue distribution, in skeletal muscle, isoform 1 is more abundant than isoform 2.

The protein localises to the cytoplasm. It localises to the cell membrane. It is found in the mitochondrion. The protein resides in the nucleus. The catalysed reaction is L-seryl-[protein] + ATP = O-phospho-L-seryl-[protein] + ADP + H(+). It catalyses the reaction L-threonyl-[protein] + ATP = O-phospho-L-threonyl-[protein] + ADP + H(+). Regulation is a highly complex process involving membrane recruitment, protein-protein interactions, dimerization, and phosphorylation/dephosphorylation events. Ras-GTP recruits RAF1 to the membrane, thereby promoting its activation. The inactive conformation of RAF1 is maintained by autoinhibitory interactions occurring between the N-terminal regulatory and the C-terminal catalytic domains and by the binding of a 14-3-3 protein that contacts two phosphorylation sites, Ser-259 and Ser-621. Upon mitogenic stimulation, Ras and PPP2R1A cooperate to release autoinhibition and the subsequent phosphorylation of activating sites: Ser-338, Tyr-341, Thr-491, and Ser-494, yields a fully active kinase. Through a negative feedback mechanism involving MAPK1/ERK2, RAF1 is phosphorylated on Ser-29, Ser-43, Ser-289, Ser-296, Ser-301 and Ser-642 by MAPK1/ERK2, which yields an inactive, desensitized kinase. The signaling-competent conformation of RAF1 is finally re-established by the coordinated action of PIN1, a prolyl isomerase that converts pSer and pThr residues from the cis to the trans conformation, which is preferentially recognized and dephosphorylated by PPP2R1A. Activated by homodimerization and heterodimerization (with BRAF). Also regulated through association with other proteins such as KSR2, CNKSR1/CNK1, PEBP1/RKIP, PHB/prohibitin and SPRY4. PEBP1/RKIP acts by dissociating RAF1 from its substrates MAP2K1/MEK1 and MAP2K2/MEK2. PHB/prohibitin facilitates the displacement of 14-3-3 from RAF1 by activated Ras, thereby promoting cell membrane localization and phosphorylation of RAF1 at the activating Ser-338. SPRY4 inhibits Ras-independent, but not Ras-dependent, activation of RAF1. CNKSR1/CNK1 regulates Src-mediated RAF1 activation. Serine/threonine-protein kinase that acts as a regulatory link between the membrane-associated Ras GTPases and the MAPK/ERK cascade, and this critical regulatory link functions as a switch determining cell fate decisions including proliferation, differentiation, apoptosis, survival and oncogenic transformation. RAF1 activation initiates a mitogen-activated protein kinase (MAPK) cascade that comprises a sequential phosphorylation of the dual-specific MAPK kinases (MAP2K1/MEK1 and MAP2K2/MEK2) and the extracellular signal-regulated kinases (MAPK3/ERK1 and MAPK1/ERK2). The phosphorylated form of RAF1 (on residues Ser-338 and Ser-339, by PAK1) phosphorylates BAD/Bcl2-antagonist of cell death at 'Ser-75'. Phosphorylates adenylyl cyclases: ADCY2, ADCY5 and ADCY6, resulting in their activation. Phosphorylates PPP1R12A resulting in inhibition of the phosphatase activity. Phosphorylates TNNT2/cardiac muscle troponin T. Can promote NF-kB activation and inhibit signal transducers involved in motility (ROCK2), apoptosis (MAP3K5/ASK1 and STK3/MST2), proliferation and angiogenesis (RB1). Can protect cells from apoptosis also by translocating to the mitochondria where it binds BCL2 and displaces BAD/Bcl2-antagonist of cell death. Regulates Rho signaling and migration, and is required for normal wound healing. Plays a role in the oncogenic transformation of epithelial cells via repression of the TJ protein, occludin (OCLN) by inducing the up-regulation of a transcriptional repressor SNAI2/SLUG, which induces down-regulation of OCLN. Restricts caspase activation in response to selected stimuli, notably Fas stimulation, pathogen-mediated macrophage apoptosis, and erythroid differentiation. The chain is RAF proto-oncogene serine/threonine-protein kinase from Homo sapiens (Human).